The following is a 204-amino-acid chain: Quinol oxidase subunit 3 (204 aa).

5 consecutive transmembrane segments (helical) span residues 27 to 47 (FWIF…TFFV), 66 to 86 (LVMI…IAVH), 95 to 115 (GVVI…GCEI), 140 to 160 (LLGT…GILI), and 184 to 204 (FLDV…LGGL).

This sequence belongs to the cytochrome c oxidase subunit 3 family.

The protein resides in the cell membrane. The catalysed reaction is 2 a quinol + O2 = 2 a quinone + 2 H2O. In terms of biological role, catalyzes quinol oxidation with the concomitant reduction of oxygen to water. Major component for energy conversion during vegetative growth. The polypeptide is Quinol oxidase subunit 3 (qoxC) (Bacillus spizizenii (strain ATCC 23059 / NRRL B-14472 / W23) (Bacillus subtilis subsp. spizizenii)).